The primary structure comprises 122 residues: Small ribosomal subunit protein uS13 (122 aa).

Positions 92–122 are disordered; it reads HRMGLPVRGQRTKTNARTRKGPSKPVSGKKK. Positions 101-122 are enriched in basic residues; sequence QRTKTNARTRKGPSKPVSGKKK.

This sequence belongs to the universal ribosomal protein uS13 family. As to quaternary structure, part of the 30S ribosomal subunit. Forms a loose heterodimer with protein S19. Forms two bridges to the 50S subunit in the 70S ribosome.

In terms of biological role, located at the top of the head of the 30S subunit, it contacts several helices of the 16S rRNA. In the 70S ribosome it contacts the 23S rRNA (bridge B1a) and protein L5 of the 50S subunit (bridge B1b), connecting the 2 subunits; these bridges are implicated in subunit movement. Contacts the tRNAs in the A and P-sites. This chain is Small ribosomal subunit protein uS13, found in Ruminiclostridium cellulolyticum (strain ATCC 35319 / DSM 5812 / JCM 6584 / H10) (Clostridium cellulolyticum).